Consider the following 389-residue polypeptide: MVWDFVLSLFHSLLAAFQTLTSWLTGSFLFNNKMAPAPNPAPVTFILPDLEKTFNSLPDDGLNPHHDVACAESREWFAKYNKKVLGAQMQEFFRRCKFELITSYTYPYVDKEGLRATMDWHNILWFFDEVTDTETGKDAHKSAIITIRTLREPDFDDGSSLCRMVRDFRLSHLSRAGPECTRRFLEHCDVAFHAGAVEAELREKGEVLSIEGYLKLRRETSGARTCFDMAEYLMDIDLPQDMYDDPVFQKGYIAALDLIFLANDLYSYNMEQAKGHNGANVLTVVMKETKLNLQSAADYVGVLCEKLIKQFQEAKSTLENRLAKEKNPAKAAALKDAIRSLVGYGHWVRGNVEWSFETERYFGKKNKEIKKSRVVTLTPTNSVNRALKA.

Residues 1-15 (MVWDFVLSLFHSLLA) form the signal peptide. Positions 128, 263, 267, and 271 each coordinate Mg(2+). A DDXXD motif motif is present at residues 128–132 (DEVTD). Residues arginine 360 and tyrosine 361 each contribute to the (2E,6E)-farnesyl diphosphate site.

Belongs to the terpene synthase family. It depends on Mg(2+) as a cofactor.

It carries out the reaction (2E,6E)-farnesyl diphosphate = viridiflorene + diphosphate. In terms of biological role, terpene cyclase that catalyzes the cyclization of farnesyl diphosphate (FPP) to viridiflorene. This chain is viridiflorene synthase Agr2, found in Cyclocybe aegerita (Black poplar mushroom).